The primary structure comprises 133 residues: 6,7-dimethyl-8-ribityllumazine synthase (133 aa).

Residues F11, 43–45 (AYD), and 67–69 (AIV) each bind 5-amino-6-(D-ribitylamino)uracil. 72-73 (DT) provides a ligand contact to (2S)-2-hydroxy-3-oxobutyl phosphate. Residue H75 is the Proton donor of the active site. F100 is a binding site for 5-amino-6-(D-ribitylamino)uracil. R115 is a (2S)-2-hydroxy-3-oxobutyl phosphate binding site.

It belongs to the DMRL synthase family.

It catalyses the reaction (2S)-2-hydroxy-3-oxobutyl phosphate + 5-amino-6-(D-ribitylamino)uracil = 6,7-dimethyl-8-(1-D-ribityl)lumazine + phosphate + 2 H2O + H(+). The protein operates within cofactor biosynthesis; riboflavin biosynthesis; riboflavin from 2-hydroxy-3-oxobutyl phosphate and 5-amino-6-(D-ribitylamino)uracil: step 1/2. Catalyzes the formation of 6,7-dimethyl-8-ribityllumazine by condensation of 5-amino-6-(D-ribitylamino)uracil with 3,4-dihydroxy-2-butanone 4-phosphate. This is the penultimate step in the biosynthesis of riboflavin. This is 6,7-dimethyl-8-ribityllumazine synthase from Halobacterium salinarum (strain ATCC 29341 / DSM 671 / R1).